Here is a 235-residue protein sequence, read N- to C-terminus: Sugar fermentation stimulation protein homolog (235 aa).

This sequence belongs to the SfsA family.

The chain is Sugar fermentation stimulation protein homolog from Pseudomonas aeruginosa (strain LESB58).